Consider the following 1023-residue polypeptide: MGSVLYSLSESANLYPASELFLRHRLQIVEELWESVLRQECGQNMVDLLRQLRDLCSPEGQATKDQAVSAVKLIEQLNINEAIRAARAFALYFQLINIIEQEYEQRQQLTRYSDLEAETAPLNGSENITSSSNHNEDDVIFNRGLGTDFLGKNWTNRGQGKQKGTFAALFPLLSKLNVPPQQIQRLISQLDVRLVFTAHPTEIVRHTIRDKQRQVVDLLQQLDEVENRAKEGGGYPWEAGEIREKLLEEIRLWWRTDELHQFKPTVLDEVDYALHYFQEVLFDGIPQLYKRFKYALNQTFSWLEPPSKDFCSFGSWVGSDRDGNPSVTPEITWQTACYQRKMVLERYIKSVKQLIELLSISMHWSDVLPDLLESLELDQSQLSEVYDALALRYRQEPYRLKLAYVLKRLENTRDRNLALYKGETPTNEDSPMYRSGAEFLAELRLIQHNLTETGLSCRELDNLICQVEIFDFNLTKLDIRQESTRHSDALNEILDYLQLLPQPYNDLSEEQRVAWLTTELQTRRPLISSELPFSDKTNDVIKTFRVVRSLQQEFGINICQTYIISMCRQVSDVLEVLLLAKEARLFDPAIAVGTIQVVPLFETVEDLQRSRSVMRQLFELPLYRALLAGGYKSTEVKVPSPESTPLPTPHSVLTPDLQEVMLGYSDSNKDSGFLSSNWEIHKAQKSLQKIAEEYGVNLRIFHGRGGSVGRGGGPAHEAILAQPGHSINGRIKITEQGEVLASKYSLLDLALYNLETITTAVIQASLLRTGFDDIEPWNEIMEELAARSRQHYRGLIYEQPDFIDFFHQVTPIEEISQLQISSRPARRPSGKKDLSSLRAIPWVFSWTQTRFLLPSWYGVGTALQEFFNEEPEEHLKLMRYFYVKWPFFKMVISKVEMTLAKVDMQMAGHYVQELSDPEDKSRFEKVFEQIANEYYLTRDLVLKITDHSRLLDGDPVLQRSVQLRNGTIVPLGFIQVSLLKRLRQSKNNNATSGVIHSRYSKGELLRGALLTINGIAAGMRNTG.

Active-site residues include histidine 199 and lysine 669.

Belongs to the PEPCase type 1 family. Mg(2+) is required as a cofactor.

The enzyme catalyses oxaloacetate + phosphate = phosphoenolpyruvate + hydrogencarbonate. In terms of biological role, forms oxaloacetate, a four-carbon dicarboxylic acid source for the tricarboxylic acid cycle. This Trichormus variabilis (strain ATCC 29413 / PCC 7937) (Anabaena variabilis) protein is Phosphoenolpyruvate carboxylase.